The chain runs to 265 residues: Capsule polysaccharide export inner-membrane protein BexB (265 aa).

The next 6 helical transmembrane spans lie at Ile-37–Trp-57, Lys-64–Trp-84, Val-121–Ile-141, Phe-148–Ile-168, Phe-178–Phe-198, and Glu-235–Val-255. Residues Ile-37–Phe-258 form the ABC transmembrane type-2 domain.

This sequence belongs to the ABC-2 integral membrane protein family.

The protein resides in the cell inner membrane. May form an ATP-driven capsule polysaccharide export apparatus, in association with the BexA, BexC and BexD proteins. This chain is Capsule polysaccharide export inner-membrane protein BexB (bexB), found in Haemophilus influenzae.